We begin with the raw amino-acid sequence, 392 residues long: Formate-dependent phosphoribosylglycinamide formyltransferase (392 aa).

N(1)-(5-phospho-beta-D-ribosyl)glycinamide is bound by residues 22 to 23 (EL) and Glu-82. ATP is bound by residues Arg-114, Lys-155, 160–165 (SSGKGQ), 195–198 (EGVV), and Glu-203. Residues 119–308 (RLAAEELQLP…EFALHVRAFL (190 aa)) form the ATP-grasp domain. Glu-267 and Glu-279 together coordinate Mg(2+). Residues Asp-286, Lys-355, and 362-363 (RR) each bind N(1)-(5-phospho-beta-D-ribosyl)glycinamide.

Belongs to the PurK/PurT family. In terms of assembly, homodimer.

The enzyme catalyses N(1)-(5-phospho-beta-D-ribosyl)glycinamide + formate + ATP = N(2)-formyl-N(1)-(5-phospho-beta-D-ribosyl)glycinamide + ADP + phosphate + H(+). It participates in purine metabolism; IMP biosynthesis via de novo pathway; N(2)-formyl-N(1)-(5-phospho-D-ribosyl)glycinamide from N(1)-(5-phospho-D-ribosyl)glycinamide (formate route): step 1/1. In terms of biological role, involved in the de novo purine biosynthesis. Catalyzes the transfer of formate to 5-phospho-ribosyl-glycinamide (GAR), producing 5-phospho-ribosyl-N-formylglycinamide (FGAR). Formate is provided by PurU via hydrolysis of 10-formyl-tetrahydrofolate. This chain is Formate-dependent phosphoribosylglycinamide formyltransferase, found in Escherichia coli O157:H7.